A 229-amino-acid chain; its full sequence is Histidine biosynthesis bifunctional protein HisIE (229 aa).

Positions 1–127 (MNTLLDGIDW…APDTSALYGV (127 aa)) are phosphoribosyl-AMP cyclohydrolase. Residues 128–229 (VDRLYHELLA…IAEKNSRKDS (102 aa)) are phosphoribosyl-ATP pyrophosphohydrolase.

In the N-terminal section; belongs to the PRA-CH family. The protein in the C-terminal section; belongs to the PRA-PH family.

It localises to the cytoplasm. The catalysed reaction is 1-(5-phospho-beta-D-ribosyl)-ATP + H2O = 1-(5-phospho-beta-D-ribosyl)-5'-AMP + diphosphate + H(+). It catalyses the reaction 1-(5-phospho-beta-D-ribosyl)-5'-AMP + H2O = 1-(5-phospho-beta-D-ribosyl)-5-[(5-phospho-beta-D-ribosylamino)methylideneamino]imidazole-4-carboxamide. It functions in the pathway amino-acid biosynthesis; L-histidine biosynthesis; L-histidine from 5-phospho-alpha-D-ribose 1-diphosphate: step 2/9. The protein operates within amino-acid biosynthesis; L-histidine biosynthesis; L-histidine from 5-phospho-alpha-D-ribose 1-diphosphate: step 3/9. The chain is Histidine biosynthesis bifunctional protein HisIE from Wolinella succinogenes (strain ATCC 29543 / DSM 1740 / CCUG 13145 / JCM 31913 / LMG 7466 / NCTC 11488 / FDC 602W) (Vibrio succinogenes).